The primary structure comprises 47 residues: uncharacterized protein (47 aa).

The N-terminal stretch at 1–25 (MAHKCASAKLLSGIMALLFNGKSLL) is a signal peptide.

This is an uncharacterized protein from Saccharomyces cerevisiae (strain ATCC 204508 / S288c) (Baker's yeast).